The chain runs to 240 residues: MNERIALYEGKAKIVYASESPDELVLHFKDDTSAFDGEKVEQLAHKGEINNAFNAFIMEYLQGEGVPTHFIRRLNARESLVRRLEMIPVECVVRNRAAGSLSKRLGIEEGRVLEPPTLEFFLKNDALHDPMINTSHIRTFGWATAEEVEAMRRWTMRVNMLLSALFAKANLILVDFKLEFGRFDGELYLGDEFSPDGCRLWDALSLEKMDKDRFRRGLGGVVEAYAEVARRLGVPLPAAS.

It belongs to the SAICAR synthetase family.

It carries out the reaction 5-amino-1-(5-phospho-D-ribosyl)imidazole-4-carboxylate + L-aspartate + ATP = (2S)-2-[5-amino-1-(5-phospho-beta-D-ribosyl)imidazole-4-carboxamido]succinate + ADP + phosphate + 2 H(+). The protein operates within purine metabolism; IMP biosynthesis via de novo pathway; 5-amino-1-(5-phospho-D-ribosyl)imidazole-4-carboxamide from 5-amino-1-(5-phospho-D-ribosyl)imidazole-4-carboxylate: step 1/2. This Acidithiobacillus ferrooxidans (strain ATCC 23270 / DSM 14882 / CIP 104768 / NCIMB 8455) (Ferrobacillus ferrooxidans (strain ATCC 23270)) protein is Phosphoribosylaminoimidazole-succinocarboxamide synthase.